Here is a 238-residue protein sequence, read N- to C-terminus: tRNA1(Val) (adenine(37)-N6)-methyltransferase (238 aa).

This sequence belongs to the methyltransferase superfamily. tRNA (adenine-N(6)-)-methyltransferase family.

Its subcellular location is the cytoplasm. It catalyses the reaction adenosine(37) in tRNA1(Val) + S-adenosyl-L-methionine = N(6)-methyladenosine(37) in tRNA1(Val) + S-adenosyl-L-homocysteine + H(+). In terms of biological role, specifically methylates the adenine in position 37 of tRNA(1)(Val) (anticodon cmo5UAC). The chain is tRNA1(Val) (adenine(37)-N6)-methyltransferase from Shewanella baltica (strain OS223).